Consider the following 164-residue polypeptide: Crossover junction endodeoxyribonuclease RuvC (164 aa).

Catalysis depends on residues Asp-7, Glu-67, and Asp-139. Mg(2+) is bound by residues Asp-7, Glu-67, and Asp-139.

This sequence belongs to the RuvC family. In terms of assembly, homodimer which binds Holliday junction (HJ) DNA. The HJ becomes 2-fold symmetrical on binding to RuvC with unstacked arms; it has a different conformation from HJ DNA in complex with RuvA. In the full resolvosome a probable DNA-RuvA(4)-RuvB(12)-RuvC(2) complex forms which resolves the HJ. Mg(2+) serves as cofactor.

It localises to the cytoplasm. It carries out the reaction Endonucleolytic cleavage at a junction such as a reciprocal single-stranded crossover between two homologous DNA duplexes (Holliday junction).. In terms of biological role, the RuvA-RuvB-RuvC complex processes Holliday junction (HJ) DNA during genetic recombination and DNA repair. Endonuclease that resolves HJ intermediates. Cleaves cruciform DNA by making single-stranded nicks across the HJ at symmetrical positions within the homologous arms, yielding a 5'-phosphate and a 3'-hydroxyl group; requires a central core of homology in the junction. The consensus cleavage sequence is 5'-(A/T)TT(C/G)-3'. Cleavage occurs on the 3'-side of the TT dinucleotide at the point of strand exchange. HJ branch migration catalyzed by RuvA-RuvB allows RuvC to scan DNA until it finds its consensus sequence, where it cleaves and resolves the cruciform DNA. This chain is Crossover junction endodeoxyribonuclease RuvC, found in Geobacter metallireducens (strain ATCC 53774 / DSM 7210 / GS-15).